Reading from the N-terminus, the 239-residue chain is MSRDPILSLPWPDARPLPDTFFDRDALLVARELLGKVIRHRQGNLWLAARIIETEAYYLEEKGSHASLGYTEKRKALFLDGGHIYMYYARGGDSLNFSAGGPGNAVLIKSGHPWLDRISDHTALERMQSLNPDSQGRPREIGRLCAGQTLLCKAMGLKVPEWDAQRFDPQRLFVDDVGERPSQVIQAARLGIPKGRDEHLPYRFVDAAFAAFCTRNPLRRGQVAGRDYHLLGHQDPHLQ.

The protein belongs to the DNA glycosylase MPG family.

This Pseudomonas aeruginosa (strain ATCC 15692 / DSM 22644 / CIP 104116 / JCM 14847 / LMG 12228 / 1C / PRS 101 / PAO1) protein is Putative 3-methyladenine DNA glycosylase.